Here is a 445-residue protein sequence, read N- to C-terminus: Probable multidrug resistance protein YpnP (445 aa).

The next 12 helical transmembrane spans lie at 15–35 (LVLFSMPIMLGNALQVSFQFI), 49–69 (LGAAAVSSTIVLTVLSFILGL), 95–115 (AFVVLLTGLSIGFGAAGFFLS), 136–156 (LQIQFIGILFLFGYNFISTVL), 168–188 (FIAFAVVLNTVLAPLFISVFR), 194–214 (AAYSTILSQGIAFLYGLFYVI), 240–260 (IPAGLQMMVITGGMMAIMSVV), 277–297 (LDSIITLPAMAAGTAVNSMAG), 314–334 (LGVIAVISCMLVIAVMIWVFG), 355–375 (LKWIAFFYPFIGVNFVLNGIV), 384–404 (VLVLNLISFWVLRYPFTALFS), and 411–431 (GIGLGIGMSFLFSSCAAFLYY).

This sequence belongs to the multi antimicrobial extrusion (MATE) (TC 2.A.66.1) family.

Its subcellular location is the cell membrane. This is Probable multidrug resistance protein YpnP (ypnP) from Bacillus subtilis (strain 168).